Consider the following 324-residue polypeptide: Proto-oncogene Mas (324 aa).

Over 1-35 (MDQSNMTSFAEEKAMNTSSRNASLGTSHPPIPIVH) the chain is Extracellular. 3 N-linked (GlcNAc...) asparagine glycosylation sites follow: Asn-5, Asn-16, and Asn-21. A helical membrane pass occupies residues 36–60 (WVIMSISPLGFVENGILLWFLCFRM). Topologically, residues 61 to 64 (RRNP) are cytoplasmic. Residues 65–86 (FTVYITHLSIADISLLFCIFIL) traverse the membrane as a helical segment. Residues 87–103 (SIDYALDYELSSGHYYT) lie on the Extracellular side of the membrane. Residues 104–127 (IVTLSVTFLFGYNTGLYLLTAISV) form a helical membrane-spanning segment. The Cytoplasmic portion of the chain corresponds to 128-148 (ERCLSVLYPIWYRCHRPKHQS). Residues 149-171 (AFVCALLWALSCLVTTMEYVMCI) form a helical membrane-spanning segment. Over 172–184 (DSGEESHSQSDCR) the chain is Extracellular. A helical membrane pass occupies residues 185–205 (AVIIFIAILSFLVFTPLMLVS). The Cytoplasmic portion of the chain corresponds to 206–223 (STILVVKIRKNTWASHSS). Residues 224 to 244 (KLYIVIMVTIIIFLIFAMPMR) traverse the membrane as a helical segment. Over 245-262 (VLYLLYYEYWSTFGNLHN) the chain is Extracellular. A helical membrane pass occupies residues 263–283 (ISLLFSTINSSANPFIYFFVG). Topologically, residues 284–324 (SSKKKRFRESLKVVLTRAFKDEMQPRRQEGNGNTVSIETVV) are cytoplasmic.

The protein belongs to the G-protein coupled receptor 1 family. In terms of assembly, interacts with AGTR1. Interacts with FLNA (via filamin repeat 21); increases PKA-mediated phosphorylation of FLNA. As to expression, expressed in platelets.

The protein resides in the cell membrane. In terms of biological role, receptor for angiotensin 1-7. Acts specifically as a functional antagonist of AGTR1 (angiotensin-2 type 1 receptor), although it up-regulates AGTR1 receptor levels. Positive regulation of AGTR1 levels occurs through activation of the G-proteins GNA11 and GNAQ, and stimulation of the protein kinase C signaling cascade. The antagonist effect on AGTR1 function is probably due to AGTR1 being physically altered by MAS1. The sequence is that of Proto-oncogene Mas (Mas1) from Rattus norvegicus (Rat).